The following is a 104-amino-acid chain: L-rhamnose mutarotase (104 aa).

Tyr18 serves as a coordination point for substrate. The Proton donor role is filled by His22. Substrate-binding positions include Tyr41 and 76–77 (WW).

The protein belongs to the rhamnose mutarotase family. As to quaternary structure, homodimer.

The protein localises to the cytoplasm. It catalyses the reaction alpha-L-rhamnose = beta-L-rhamnose. It participates in carbohydrate metabolism; L-rhamnose metabolism. In terms of biological role, involved in the anomeric conversion of L-rhamnose. This chain is L-rhamnose mutarotase, found in Bacteroides thetaiotaomicron (strain ATCC 29148 / DSM 2079 / JCM 5827 / CCUG 10774 / NCTC 10582 / VPI-5482 / E50).